The following is a 294-amino-acid chain: NADH-cytochrome b5 reductase 1 (294 aa).

Residues 13-33 (PHASFLGGLVVAAILGLFIFF) form a helical membrane-spanning segment. The 104-residue stretch at 44 to 147 (VEWRSFKLVD…KGPKGKFVYT (104 aa)) folds into the FAD-binding FR-type domain. FAD is bound by residues 127-142 (SLLT…GPKG) and 153-185 (HLVM…RLSL).

It belongs to the flavoprotein pyridine nucleotide cytochrome reductase family. As to quaternary structure, monomer. Component of the 2-(3-amino-3-carboxypropyl)histidine synthase complex composed of DPH1, DPH2, DPH3 and a NADH-dependent reductase, predominantly CBR1. It depends on FAD as a cofactor.

The protein resides in the mitochondrion outer membrane. The catalysed reaction is 2 Fe(III)-[cytochrome b5] + NADH = 2 Fe(II)-[cytochrome b5] + NAD(+) + H(+). The enzyme catalyses 2 Fe(3+)-[Dph3] + NADH = 2 Fe(2+)-[Dph3] + NAD(+) + H(+). It functions in the pathway protein modification; peptidyl-diphthamide biosynthesis. Functionally, NADH-dependent reductase for DPH3 and cytochrome b5. Required for the first step of diphthamide biosynthesis, a post-translational modification of histidine which occurs in elongation factor 2. DPH1 and DPH2 transfer a 3-amino-3-carboxypropyl (ACP) group from S-adenosyl-L-methionine (SAM) to a histidine residue, the reaction is assisted by a reduction system comprising DPH3 and a NADH-dependent reductase, predominantly CBR1. By reducing DPH3, also involved in the formation of the tRNA wobble base modification mcm5s 2U (5-methoxycarbonylmethyl-2-thiouridine), mediated by the elongator complex. The cytochrome b5/NADH cytochrome b5 reductase electron transfer system supports the catalytic activity of several sterol biosynthetic enzymes. This chain is NADH-cytochrome b5 reductase 1 (CBR1), found in Cryptococcus neoformans var. neoformans serotype D (strain B-3501A) (Filobasidiella neoformans).